A 1088-amino-acid polypeptide reads, in one-letter code: DNA damage-binding protein 1b (1088 aa).

This sequence belongs to the DDB1 family. Interacts with DDA1. Binds to KTN80.2/DWA3. Interacts with HTD1.

Its subcellular location is the nucleus. It functions in the pathway protein modification; protein ubiquitination. Functionally, component of light signal transduction machinery. Involved in repression of photomorphogenesis in darkness. Plays a role in DNA repair by forming with DDB2 the UV-damaged DNA-binding protein complex (UV-DDB). The protein is DNA damage-binding protein 1b of Arabidopsis thaliana (Mouse-ear cress).